Here is a 404-residue protein sequence, read N- to C-terminus: ATP phosphoribosyltransferase regulatory subunit (404 aa).

Belongs to the class-II aminoacyl-tRNA synthetase family. HisZ subfamily. Heteromultimer composed of HisG and HisZ subunits.

It localises to the cytoplasm. It participates in amino-acid biosynthesis; L-histidine biosynthesis; L-histidine from 5-phospho-alpha-D-ribose 1-diphosphate: step 1/9. Its function is as follows. Required for the first step of histidine biosynthesis. May allow the feedback regulation of ATP phosphoribosyltransferase activity by histidine. This chain is ATP phosphoribosyltransferase regulatory subunit, found in Picosynechococcus sp. (strain ATCC 27264 / PCC 7002 / PR-6) (Agmenellum quadruplicatum).